Consider the following 384-residue polypeptide: Anhydro-N-acetylmuramic acid kinase (384 aa).

9–16 is a binding site for ATP; sequence GTSADGVD.

Belongs to the anhydro-N-acetylmuramic acid kinase family.

The catalysed reaction is 1,6-anhydro-N-acetyl-beta-muramate + ATP + H2O = N-acetyl-D-muramate 6-phosphate + ADP + H(+). Its pathway is amino-sugar metabolism; 1,6-anhydro-N-acetylmuramate degradation. It functions in the pathway cell wall biogenesis; peptidoglycan recycling. Functionally, catalyzes the specific phosphorylation of 1,6-anhydro-N-acetylmuramic acid (anhMurNAc) with the simultaneous cleavage of the 1,6-anhydro ring, generating MurNAc-6-P. Is required for the utilization of anhMurNAc either imported from the medium or derived from its own cell wall murein, and thus plays a role in cell wall recycling. The polypeptide is Anhydro-N-acetylmuramic acid kinase (Synechococcus sp. (strain CC9311)).